The chain runs to 474 residues: Trehalose-6-phosphate synthase (474 aa).

Arginine 10 is a D-glucose 6-phosphate binding site. UDP-alpha-D-glucose is bound at residue 22–23; the sequence is GG. Residues tyrosine 77 and aspartate 131 each coordinate D-glucose 6-phosphate. 2 residues coordinate UDP-alpha-D-glucose: arginine 263 and lysine 268. Arginine 301 contributes to the D-glucose 6-phosphate binding site. Residues phenylalanine 340 and 366 to 370 contribute to the UDP-alpha-D-glucose site; that span reads LVAKE.

This sequence belongs to the glycosyltransferase 20 family. Homotetramer.

The catalysed reaction is D-glucose 6-phosphate + UDP-alpha-D-glucose = alpha,alpha-trehalose 6-phosphate + UDP + H(+). It functions in the pathway glycan biosynthesis; trehalose biosynthesis. In terms of biological role, probably involved in the osmoprotection via the biosynthesis of trehalose. Catalyzes the transfer of glucose from UDP-alpha-D-glucose (UDP-Glc) to D-glucose 6-phosphate (Glc-6-P) to form trehalose-6-phosphate. Acts with retention of the anomeric configuration of the UDP-sugar donor. The chain is Trehalose-6-phosphate synthase from Escherichia coli O1:K1 / APEC.